A 515-amino-acid chain; its full sequence is RNA exonuclease NGL2 (515 aa).

Disordered regions lie at residues 1-54 and 353-381; these read MTQD…SKPI and RDGE…PVPE. The segment covering 21–34 has biased composition (basic and acidic residues); that stretch reads EINKSVKDAKHQTN. Residues 40 to 52 show a composition bias toward basic residues; the sequence is QHKKKGKKGKKSK. The segment covering 369-381 has biased composition (basic and acidic residues); that stretch reads KYGKDQPESPVPE.

It belongs to the CCR4/nocturin family.

The protein resides in the cytoplasm. It is found in the nucleus. In terms of biological role, involved in pre-rRNA processing. Required for the final stage of 3'-end maturation of 5.8S rRNA at site E. This Saccharomyces cerevisiae (strain ATCC 204508 / S288c) (Baker's yeast) protein is RNA exonuclease NGL2 (NGL2).